The sequence spans 425 residues: Enolase (425 aa).

Gln162 provides a ligand contact to (2R)-2-phosphoglycerate. The active-site Proton donor is the Glu204. 3 residues coordinate Mg(2+): Asp241, Glu282, and Asp309. The (2R)-2-phosphoglycerate site is built by Lys334, Arg363, Ser364, and Lys385. Lys334 (proton acceptor) is an active-site residue.

This sequence belongs to the enolase family. Mg(2+) is required as a cofactor.

It localises to the cytoplasm. The protein localises to the secreted. The protein resides in the cell surface. It carries out the reaction (2R)-2-phosphoglycerate = phosphoenolpyruvate + H2O. The protein operates within carbohydrate degradation; glycolysis; pyruvate from D-glyceraldehyde 3-phosphate: step 4/5. Functionally, catalyzes the reversible conversion of 2-phosphoglycerate (2-PG) into phosphoenolpyruvate (PEP). It is essential for the degradation of carbohydrates via glycolysis. The chain is Enolase from Corynebacterium jeikeium (strain K411).